Reading from the N-terminus, the 264-residue chain is Phosphonates import ATP-binding protein PhnC (264 aa).

The ABC transporter domain occupies Ile3–Gln246. ATP is bound at residue Gly35–Ser42.

It belongs to the ABC transporter superfamily. Phosphonates importer (TC 3.A.1.9.1) family. The complex is composed of two ATP-binding proteins (PhnC), two transmembrane proteins (PhnE) and a solute-binding protein (PhnD).

It localises to the cell inner membrane. It catalyses the reaction phosphonate(out) + ATP + H2O = phosphonate(in) + ADP + phosphate + H(+). Functionally, part of the ABC transporter complex PhnCDE involved in phosphonates import. Responsible for energy coupling to the transport system. This is Phosphonates import ATP-binding protein PhnC from Pseudomonas entomophila (strain L48).